Reading from the N-terminus, the 156-residue chain is MGRFIFVSFGLLVVFLSLSGTGADCPFDWSSFRQYCYRVFKQLKTWEDAERFCSEQVKGARLVSIESYREAVFVAQLLSENIKATKSHVWIGLSVENKGQQCSSKWSDGSSVSYENLVKPFSKKCFVLKKESEFHKWFNVYCGQQHLFMCKFLRPR.

The N-terminal stretch at 1-23 (MGRFIFVSFGLLVVFLSLSGTGA) is a signal peptide. Intrachain disulfides connect cysteine 25-cysteine 36, cysteine 53-cysteine 150, and cysteine 125-cysteine 142. In terms of domain architecture, C-type lectin spans 32–151 (FRQYCYRVFK…CGQQHLFMCK (120 aa)).

Belongs to the snaclec family. As to quaternary structure, heterodimer of subunits alpha and beta; disulfide-linked. In terms of tissue distribution, expressed by the venom gland.

It is found in the secreted. Snaclec that dose-dependently inhibits platelet aggregation induced by ristocetin or low-dose thrombin, but not by high-dose thrombin. Binds to GPIbalpha (GP1BA). In vivo, also dose-dependently induces thrombocytopenia of mice and platelet counts remains at very low level even after 18 hours intravenous injection. The sequence is that of Snaclec jerdonibitin subunit alpha from Protobothrops jerdonii (Jerdon's pitviper).